The primary structure comprises 250 residues: Agamous-like MADS-box protein AGL8 homolog (250 aa).

An MADS-box domain is found at 3–57 (RGRVQLKRIENKINRQVTFSKRRSGLLKKAHEISVLCDAEVGLIVFSTKGKLFEY). The 91-residue stretch at 88 to 178 (PGSWTLENAK…SKKVKEREKE (91 aa)) folds into the K-box domain. Disordered regions lie at residues 162-191 (QEQNNQLSKKVKEREKEVEQQNQWDQQNHE) and 206-241 (PHLGEASQNTNVVDNGEVEGGNSSQXQGAANNTVMP). A compositionally biased stretch (basic and acidic residues) spans 171–180 (KVKEREKEVE). Polar residues-rich tracts occupy residues 181–191 (QQNQWDQQNHE) and 226–240 (GNSSQXQGAANNTVM).

It localises to the nucleus. Functionally, probable transcription factor. This Solanum commersonii (Commerson's wild potato) protein is Agamous-like MADS-box protein AGL8 homolog (SCM1).